Reading from the N-terminus, the 174-residue chain is Regenerating islet-derived protein 3-alpha (174 aa).

An N-terminal signal peptide occupies residues 1-25; it reads MLPRLSFNNVSWTLLYYLFIFQVRG. The propeptide occupies 26–36; sequence EDSQKAVPSTR. 3 cysteine pairs are disulfide-bonded: cysteine 39–cysteine 50, cysteine 67–cysteine 170, and cysteine 145–cysteine 162. Residues 46-171 enclose the C-type lectin domain; that stretch reads YRSYCYTLVT…CDVELPFVCK (126 aa). The interval 102-117 is sufficient to activate EXTL3; it reads WIWLHDPTMGQQPNGG. Residues histidine 106 and glutamate 120 each coordinate Zn(2+).

In terms of assembly, forms a hexameric membrane-permeabilizing oligomeric pore on membrane phospholipids. The hexamer is formed by three dimers related by helical symmetry. Forms filaments, filamentation traps pore complexes and limits damage to host cells. Interacts with EXTL3. Post-translationally, proteolytic processing by trypsin removes an inhibitory N-terminal propeptide and is essential for peptidoglycan binding and antibacterial activity. In terms of tissue distribution, low expression found in healthy pancreas.

It localises to the secreted. Functionally, bactericidal C-type lectin. The lack of the EPN motif may explain its inability to bind peptidoglycan. Acts as a hormone in response to different stimuli like anti-inflammatory signals, such as IL17A, or gut microbiome. Secreted by different cell types to activate its receptor EXTL3 and induce cell specific signaling pathways. Induced by IL17A in keratinocytes, regulates keratinocyte proliferation and differentiation after skin injury via activation of EXTL3-PI3K-AKT signaling pathway. In parallel, inhibits skin inflammation through the inhibition of inflammatory cytokines such as IL6 and TNF. In pancreas, is able to permealize beta-cells membrane and stimulate their proliferation. This is Regenerating islet-derived protein 3-alpha (Reg3a) from Rattus norvegicus (Rat).